Consider the following 252-residue polypeptide: MQIVVATHNEGKLVEIRRILEEDLGADAENIELVSAGSLHLPDPVETGVTFQENALLKARAVAIRTGLPAVADDSGLIVDVMGNAPGILSARWAGAHGHDKANNALLLAQIEDIPDDKRTARFRCAAALVVPDTETGADVTGGVAADGITVHTTAADGSPAPVHARYAIKSETVELGDMPGRIIREARGVHGFGYDPLFVPDDQPAGRVSTEPDHEGEPLTSAEMTPAEKNAISHRGKALKALVPAIEALLH.

7 to 12 serves as a coordination point for substrate; the sequence is THNEGK. Asp74 (proton acceptor) is an active-site residue. Asp74 provides a ligand contact to Mg(2+). Residues Ser75 and 193 to 196 contribute to the substrate site; that span reads FGYD. A disordered region spans residues 202–229; it reads DDQPAGRVSTEPDHEGEPLTSAEMTPAE. Residues Lys230 and 235–236 contribute to the substrate site; that span reads HR.

It belongs to the HAM1 NTPase family. In terms of assembly, homodimer. Mg(2+) serves as cofactor.

The catalysed reaction is XTP + H2O = XMP + diphosphate + H(+). It carries out the reaction dITP + H2O = dIMP + diphosphate + H(+). The enzyme catalyses ITP + H2O = IMP + diphosphate + H(+). Pyrophosphatase that catalyzes the hydrolysis of nucleoside triphosphates to their monophosphate derivatives, with a high preference for the non-canonical purine nucleotides XTP (xanthosine triphosphate), dITP (deoxyinosine triphosphate) and ITP. Seems to function as a house-cleaning enzyme that removes non-canonical purine nucleotides from the nucleotide pool, thus preventing their incorporation into DNA/RNA and avoiding chromosomal lesions. In Bifidobacterium longum (strain NCC 2705), this protein is dITP/XTP pyrophosphatase.